Consider the following 361-residue polypeptide: UDP-N-acetylglucosamine--N-acetylmuramyl-(pentapeptide) pyrophosphoryl-undecaprenol N-acetylglucosamine transferase (361 aa).

UDP-N-acetyl-alpha-D-glucosamine contacts are provided by residues 11–13 (TGG), Asn-124, Arg-164, Ser-192, and Gln-295.

The protein belongs to the glycosyltransferase 28 family. MurG subfamily.

Its subcellular location is the cell membrane. The catalysed reaction is di-trans,octa-cis-undecaprenyl diphospho-N-acetyl-alpha-D-muramoyl-L-alanyl-D-glutamyl-meso-2,6-diaminopimeloyl-D-alanyl-D-alanine + UDP-N-acetyl-alpha-D-glucosamine = di-trans,octa-cis-undecaprenyl diphospho-[N-acetyl-alpha-D-glucosaminyl-(1-&gt;4)]-N-acetyl-alpha-D-muramoyl-L-alanyl-D-glutamyl-meso-2,6-diaminopimeloyl-D-alanyl-D-alanine + UDP + H(+). The protein operates within cell wall biogenesis; peptidoglycan biosynthesis. Cell wall formation. Catalyzes the transfer of a GlcNAc subunit on undecaprenyl-pyrophosphoryl-MurNAc-pentapeptide (lipid intermediate I) to form undecaprenyl-pyrophosphoryl-MurNAc-(pentapeptide)GlcNAc (lipid intermediate II). The protein is UDP-N-acetylglucosamine--N-acetylmuramyl-(pentapeptide) pyrophosphoryl-undecaprenol N-acetylglucosamine transferase of Deinococcus geothermalis (strain DSM 11300 / CIP 105573 / AG-3a).